The following is a 155-amino-acid chain: Ribonuclease H (155 aa).

The region spanning 1 to 142 (MLKQVEIFTD…CDELARAAAM (142 aa)) is the RNase H type-1 domain. Mg(2+)-binding residues include Asp-10, Glu-48, Asp-70, and Asp-134.

This sequence belongs to the RNase H family. Monomer. It depends on Mg(2+) as a cofactor.

The protein resides in the cytoplasm. The enzyme catalyses Endonucleolytic cleavage to 5'-phosphomonoester.. Endonuclease that specifically degrades the RNA of RNA-DNA hybrids. This chain is Ribonuclease H, found in Escherichia coli O127:H6 (strain E2348/69 / EPEC).